Consider the following 493-residue polypeptide: Dipeptide permease D (493 aa).

13 helical membrane-spanning segments follow: residues 14–34 (VVAL…LLIL), 49–69 (ALFS…GYLA), 91–111 (LVLG…AIIV), 138–158 (GGFS…PIAC), 167–187 (WAMG…IFLC), 212–232 (NWGW…VLFW), 235–255 (WAVY…GKIY), 267–287 (LGLI…AQQG), 312–332 (MFQS…AWLI), 344–364 (IWGK…ILTL), 379–399 (LMIA…PVAM), 413–433 (VLTG…AGVI), and 458–478 (VFSE…LIWL).

It belongs to the major facilitator superfamily. Proton-dependent oligopeptide transporter (POT/PTR) (TC 2.A.17) family. DtpD subfamily.

Its subcellular location is the cell inner membrane. In terms of biological role, probable proton-dependent permease that transports dipeptides. The protein is Dipeptide permease D of Citrobacter rodentium (strain ICC168) (Citrobacter freundii biotype 4280).